We begin with the raw amino-acid sequence, 114 residues long: Neurotrophic factor BDNF precursor form (114 aa).

3 cysteine pairs are disulfide-bonded: cysteine 14/cysteine 81, cysteine 59/cysteine 110, and cysteine 69/cysteine 112.

This sequence belongs to the NGF-beta family. Monomers and homodimers. Binds to NTRK2/TRKB. Can form heterodimers with other neurotrophin family members, such as NTF3 and NTF4 (in vitro), but the physiological relevance of this is not clear. BDNF precursor form: interacts with the heterodimer formed by NGFR and SORCS2. Mature BDNF has much lower affinity for the heterodimer formed by NGFR and SORCS2. In terms of processing, N-glycosylated and glycosulfated, contrary to mature BDNF. Mature BDNF is produced by proteolytic removal of the propeptide, catalyzed by a FURIN family member. In addition, the precursor form is proteolytically cleaved within the propeptide, but this is not an obligatory intermediate for the production of mature BDNF. Can be converted into mature BDNF by plasmin (PLG).

It is found in the secreted. Important signaling molecule that activates signaling cascades downstream of NTRK2. During development, promotes the survival and differentiation of selected neuronal populations of the peripheral and central nervous systems. Participates in axonal growth, pathfinding and in the modulation of dendritic growth and morphology. Major regulator of synaptic transmission and plasticity at adult synapses in many regions of the CNS. The versatility of BDNF is emphasized by its contribution to a range of adaptive neuronal responses including long-term potentiation (LTP), long-term depression (LTD), certain forms of short-term synaptic plasticity, as well as homeostatic regulation of intrinsic neuronal excitability. Its function is as follows. Important signaling molecule that activates signaling cascades downstream of NTRK2. Activates signaling cascades via the heterodimeric receptor formed by NGFR and SORCS2. Signaling via NGFR and SORCS2 plays a role in synaptic plasticity and long-term depression (LTD). Binding to NGFR and SORCS2 promotes neuronal apoptosis. Promotes neuronal growth cone collapse. The chain is Neurotrophic factor BDNF precursor form (BDNF) from Macaca mulatta (Rhesus macaque).